The primary structure comprises 286 residues: Energy-coupling factor transporter ATP-binding protein EcfA2 (286 aa).

In terms of domain architecture, ABC transporter spans 3 to 246 (IRFDNVSYTY…KKKLADWHIG (244 aa)). ATP is bound at residue 40 to 47 (GQTGSGKS).

This sequence belongs to the ABC transporter superfamily. Energy-coupling factor EcfA family. As to quaternary structure, forms a stable energy-coupling factor (ECF) transporter complex composed of 2 membrane-embedded substrate-binding proteins (S component), 2 ATP-binding proteins (A component) and 2 transmembrane proteins (T component).

It is found in the cell membrane. ATP-binding (A) component of a common energy-coupling factor (ECF) ABC-transporter complex. Unlike classic ABC transporters this ECF transporter provides the energy necessary to transport a number of different substrates. In Staphylococcus aureus (strain USA300), this protein is Energy-coupling factor transporter ATP-binding protein EcfA2.